A 114-amino-acid chain; its full sequence is Large ribosomal subunit protein bL20c (114 aa).

Belongs to the bacterial ribosomal protein bL20 family.

It localises to the plastid. Its subcellular location is the chloroplast. Functionally, binds directly to 23S ribosomal RNA and is necessary for the in vitro assembly process of the 50S ribosomal subunit. It is not involved in the protein synthesizing functions of that subunit. In Trieres chinensis (Marine centric diatom), this protein is Large ribosomal subunit protein bL20c (rpl20).